A 174-amino-acid chain; its full sequence is Cytochrome c-type biogenesis protein CcmE (174 aa).

The Cytoplasmic portion of the chain corresponds to 1 to 8 (MNPRRKSR). A helical; Signal-anchor for type II membrane protein membrane pass occupies residues 9–29 (LSVVLFILLGISVASALVLYA). Residues 30 to 174 (LRQNIDLFYT…QEKQFKEGNQ (145 aa)) are Periplasmic-facing. Heme contacts are provided by histidine 131 and tyrosine 135. The disordered stretch occupies residues 149–174 (KPMGISDLKNESDRDRQEKQFKEGNQ). The segment covering 156–174 (LKNESDRDRQEKQFKEGNQ) has biased composition (basic and acidic residues).

The protein belongs to the CcmE/CycJ family.

The protein resides in the cell inner membrane. In terms of biological role, heme chaperone required for the biogenesis of c-type cytochromes. Transiently binds heme delivered by CcmC and transfers the heme to apo-cytochromes in a process facilitated by CcmF and CcmH. The polypeptide is Cytochrome c-type biogenesis protein CcmE (Histophilus somni (strain 2336) (Haemophilus somnus)).